Consider the following 315-residue polypeptide: 4-hydroxy-3-methylbut-2-enyl diphosphate reductase (315 aa).

Cys12 contributes to the [4Fe-4S] cluster binding site. (2E)-4-hydroxy-3-methylbut-2-enyl diphosphate contacts are provided by His40 and His74. Residues His40 and His74 each contribute to the dimethylallyl diphosphate site. Residues His40 and His74 each coordinate isopentenyl diphosphate. Cys96 provides a ligand contact to [4Fe-4S] cluster. His124 provides a ligand contact to (2E)-4-hydroxy-3-methylbut-2-enyl diphosphate. His124 contacts dimethylallyl diphosphate. An isopentenyl diphosphate-binding site is contributed by His124. Glu126 functions as the Proton donor in the catalytic mechanism. Residue Thr167 participates in (2E)-4-hydroxy-3-methylbut-2-enyl diphosphate binding. Residue Cys213 coordinates [4Fe-4S] cluster. (2E)-4-hydroxy-3-methylbut-2-enyl diphosphate is bound by residues Ser241, Ser242, Asn243, and Ser290. The dimethylallyl diphosphate site is built by Ser241, Ser242, Asn243, and Ser290. 4 residues coordinate isopentenyl diphosphate: Ser241, Ser242, Asn243, and Ser290.

Belongs to the IspH family. [4Fe-4S] cluster is required as a cofactor.

The catalysed reaction is isopentenyl diphosphate + 2 oxidized [2Fe-2S]-[ferredoxin] + H2O = (2E)-4-hydroxy-3-methylbut-2-enyl diphosphate + 2 reduced [2Fe-2S]-[ferredoxin] + 2 H(+). It carries out the reaction dimethylallyl diphosphate + 2 oxidized [2Fe-2S]-[ferredoxin] + H2O = (2E)-4-hydroxy-3-methylbut-2-enyl diphosphate + 2 reduced [2Fe-2S]-[ferredoxin] + 2 H(+). The protein operates within isoprenoid biosynthesis; dimethylallyl diphosphate biosynthesis; dimethylallyl diphosphate from (2E)-4-hydroxy-3-methylbutenyl diphosphate: step 1/1. Its pathway is isoprenoid biosynthesis; isopentenyl diphosphate biosynthesis via DXP pathway; isopentenyl diphosphate from 1-deoxy-D-xylulose 5-phosphate: step 6/6. Its function is as follows. Catalyzes the conversion of 1-hydroxy-2-methyl-2-(E)-butenyl 4-diphosphate (HMBPP) into a mixture of isopentenyl diphosphate (IPP) and dimethylallyl diphosphate (DMAPP). Acts in the terminal step of the DOXP/MEP pathway for isoprenoid precursor biosynthesis. In Chloroherpeton thalassium (strain ATCC 35110 / GB-78), this protein is 4-hydroxy-3-methylbut-2-enyl diphosphate reductase.